The primary structure comprises 108 residues: Large ribosomal subunit protein uL23 (108 aa).

It belongs to the universal ribosomal protein uL23 family. In terms of assembly, part of the 50S ribosomal subunit. Contacts protein L29, and trigger factor when it is bound to the ribosome.

Its function is as follows. One of the early assembly proteins it binds 23S rRNA. One of the proteins that surrounds the polypeptide exit tunnel on the outside of the ribosome. Forms the main docking site for trigger factor binding to the ribosome. This Mycoplasmoides gallisepticum (strain R(low / passage 15 / clone 2)) (Mycoplasma gallisepticum) protein is Large ribosomal subunit protein uL23.